Reading from the N-terminus, the 490-residue chain is Beta-N-acetyl-D-glucosaminide beta-1,4-N-acetylglucosaminyl-transferase (490 aa).

Topologically, residues 1 to 30 are cytoplasmic; sequence MYLVVCWGRVTGNMISTRHCFSRCKSRSVR. Residues 31-50 form a helical; Signal-anchor for type II membrane protein membrane-spanning segment; it reads VIKATAMLFVAAMLFLALHM. Asparagine 51, asparagine 82, asparagine 441, asparagine 459, and asparagine 485 each carry an N-linked (GlcNAc...) asparagine glycan. Residues 51–490 are Lumenal-facing; that stretch reads NFSHEASQQN…YLTGNFTIIS (440 aa).

This sequence belongs to the glycosyltransferase 7 family.

Its subcellular location is the golgi apparatus membrane. The enzyme catalyses an N-acetyl-beta-D-glucosaminyl derivative + UDP-N-acetyl-alpha-D-glucosamine = an N-acetyl-beta-D-glucosaminyl-(1-&gt;4)-N-acetyl-beta-D-glucosaminyl derivative + UDP + H(+). It participates in protein modification; protein glycosylation. This Lymnaea stagnalis (Great pond snail) protein is Beta-N-acetyl-D-glucosaminide beta-1,4-N-acetylglucosaminyl-transferase (GNT).